The sequence spans 131 residues: Small ribosomal subunit protein uS8 (131 aa).

Belongs to the universal ribosomal protein uS8 family. In terms of assembly, part of the 30S ribosomal subunit. Contacts proteins S5 and S12.

Its function is as follows. One of the primary rRNA binding proteins, it binds directly to 16S rRNA central domain where it helps coordinate assembly of the platform of the 30S subunit. This chain is Small ribosomal subunit protein uS8, found in Ruminiclostridium cellulolyticum (strain ATCC 35319 / DSM 5812 / JCM 6584 / H10) (Clostridium cellulolyticum).